Consider the following 404-residue polypeptide: Ammonium transporter (404 aa).

The next 9 helical transmembrane spans lie at valine 7–tyrosine 27, phenylalanine 44–alanine 64, leucine 96–phenylalanine 116, phenylalanine 125–tryptophan 145, phenylalanine 158–valine 178, isoleucine 227–isoleucine 247, leucine 254–valine 274, phenylalanine 277–leucine 297, and isoleucine 352–isoleucine 372.

The protein belongs to the ammonia transporter channel (TC 1.A.11.2) family. Interacts with NrgB for a correct localization of the latter. GlnK-AmtB complex interacts with TnrA.

It localises to the cell membrane. Its function is as follows. Functions as an ammonium and methylammonium transporter in the absence of glutamine. Required for ammonium utilization at low concentrations or at low pH values, when ammonium is the single nitrogen source. Required for binding of NrgB to the membrane. Interaction between GlnK-AmtB complex and TnrA protects TnrA from proteolytic degradation. This chain is Ammonium transporter, found in Bacillus subtilis (strain 168).